The primary structure comprises 730 residues: Dynein axonemal intermediate chain 7 (730 aa).

The segment covering 1–14 (MAPKSKKAPSKKKM) has biased composition (basic residues). Residues 1–20 (MAPKSKKAPSKKKMTKAERL) are disordered.

Belongs to the DNAI7 family. In terms of assembly, part of the multisubunit axonemal dynein complex formed at least of two heavy chains and a number of intermediate and light chains. Interacts with tubulin. Associates with microtubule. Ubiquitinated. Ubiquitination leads to its degradation through the 26S proteasome. Ubiquitin-proteasome-mediated DNAI7 degradation occurs in mitosis. In terms of tissue distribution, high expressed in lung, kidney, and testis.

The protein localises to the cell projection. Its subcellular location is the cilium. The protein resides in the cytoplasm. In terms of biological role, via its association with the multisubunit axonemal dynein complex, is potentially involved in the regulation of cilia function. May also act as a cell cycle regulator. In Mus musculus (Mouse), this protein is Dynein axonemal intermediate chain 7 (Dnai7).